A 117-amino-acid chain; its full sequence is Large ribosomal subunit protein bL20 (117 aa).

It belongs to the bacterial ribosomal protein bL20 family.

Functionally, binds directly to 23S ribosomal RNA and is necessary for the in vitro assembly process of the 50S ribosomal subunit. It is not involved in the protein synthesizing functions of that subunit. In Campylobacter jejuni subsp. jejuni serotype O:2 (strain ATCC 700819 / NCTC 11168), this protein is Large ribosomal subunit protein bL20.